A 244-amino-acid chain; its full sequence is Heat shock transcription factor (244 aa).

Residues 13-108 (IPKFIMKLYK…LLGFDDSLRM (96 aa)) mediate DNA binding. Positions 123-168 (DGSLKEIVEYLYVQNQELYTELSVCKERIERQERALNGLIEILSRV) are involved in trimerization. The segment at 204–244 (EGCEPASPPLQDKGIPELSFKPGGIPHADSDTKDDNYDPFF) is disordered. Positions 231-244 (ADSDTKDDNYDPFF) are enriched in basic and acidic residues.

Belongs to the HSF family. In terms of assembly, homotrimer. Homotrimerization increases the affinity of HSF1 to DNA.

The protein resides in the nucleus. Functionally, DNA-binding transcription factor that specifically binds heat shock promoter elements (HSE) and activates transcription. This chain is Heat shock transcription factor, found in Encephalitozoon cuniculi (strain GB-M1) (Microsporidian parasite).